A 241-amino-acid chain; its full sequence is MHIHLINPNSTASMTAQALESALLVKHAHTHVSASNPTDTPASIEGGADEAMSVPGMLAEIRQGEAQGVDAYVIACFDDPGLHAAREVAKGPVIGICQAAVQVAMTISRRFSVITTLPRSVPIIEDLVSDYGAERHCRKVRAIDLPVLALEEDPQRAERLLLKEIEIAKAEDGAEAIVLGCAGMSSLCDRLQKATGVPVIDGVTAAVKMAEALLGAGYATSKVNTYAYPRIKAAAGHKVCA.

The protein belongs to the HyuE racemase family. Homotetramer.

The catalysed reaction is a D-5-monosubstituted hydantoin = a L-5-monosubstituted hydantoin. The enzyme catalyses D-5-benzylhydantoin = L-5-benzylhydantoin. It carries out the reaction D-5-isobutylhydantoin = L-5-isobutylhydantoin. Inhibited by Cu(2+), Hg(2+), Pb(2+) and Zn(2+). The activity is twofold lower in the presence of Mn(2+), Co(2+) and Ni(2+). The insignificant effect of the metal chelating agent EDTA on the hydantoin racemase activity would indicate that it is not a metalloenzyme. Its function is as follows. May be involved in the asymmetric conversion of racemic 5-substituted hydantoins to the corresponding L-amino acids. Catalyzes the racemization via enolization of D- and L-5-monosubstituted hydantoins. The protein is Hydantoin racemase of Rhizobium meliloti (Ensifer meliloti).